The chain runs to 576 residues: Eukaryotic translation initiation factor 3 subunit D (576 aa).

The interval 103 to 176 (DSTKTRFGRG…KDYDKPQRNR (74 aa)) is disordered. The span at 110 to 122 (GRGGLARGRGQRG) shows a compositional bias: gly residues. The segment covering 165–176 (GWKDYDKPQRNR) has biased composition (basic and acidic residues). An RNA gate region spans residues 304–318 (TLDMVTVNENAADAP).

It belongs to the eIF-3 subunit D family. Component of the eukaryotic translation initiation factor 3 (eIF-3) complex.

Its subcellular location is the cytoplasm. MRNA cap-binding component of the eukaryotic translation initiation factor 3 (eIF-3) complex, which is involved in protein synthesis of a specialized repertoire of mRNAs and, together with other initiation factors, stimulates binding of mRNA and methionyl-tRNAi to the 40S ribosome. The eIF-3 complex specifically targets and initiates translation of a subset of mRNAs involved in cell proliferation. In the eIF-3 complex, eif3d specifically recognizes and binds the 7-methylguanosine cap of a subset of mRNAs. This chain is Eukaryotic translation initiation factor 3 subunit D, found in Botryotinia fuckeliana (strain B05.10) (Noble rot fungus).